The primary structure comprises 211 residues: FMN-dependent NADH:quinone oxidoreductase 2 (211 aa).

FMN contacts are provided by residues Ser-10 and 17 to 19 (SRS).

The protein belongs to the azoreductase type 1 family. Homodimer. It depends on FMN as a cofactor.

The enzyme catalyses 2 a quinone + NADH + H(+) = 2 a 1,4-benzosemiquinone + NAD(+). The catalysed reaction is N,N-dimethyl-1,4-phenylenediamine + anthranilate + 2 NAD(+) = 2-(4-dimethylaminophenyl)diazenylbenzoate + 2 NADH + 2 H(+). Its function is as follows. Quinone reductase that provides resistance to thiol-specific stress caused by electrophilic quinones. In terms of biological role, also exhibits azoreductase activity. Catalyzes the reductive cleavage of the azo bond in aromatic azo compounds to the corresponding amines. The protein is FMN-dependent NADH:quinone oxidoreductase 2 of Listeria innocua serovar 6a (strain ATCC BAA-680 / CLIP 11262).